Here is a 205-residue protein sequence, read N- to C-terminus: FMN reductase (NADH) RutF (205 aa).

Residues 171–205 are disordered; sequence PRAPRSGSAPAEPARAARALGARPAEGPALALRSA.

It belongs to the non-flavoprotein flavin reductase family. RutF subfamily.

The enzyme catalyses FMNH2 + NAD(+) = FMN + NADH + 2 H(+). Functionally, catalyzes the reduction of FMN to FMNH2 which is used to reduce pyrimidine by RutA via the Rut pathway. This is FMN reductase (NADH) RutF from Methylorubrum extorquens (strain DSM 6343 / CIP 106787 / DM4) (Methylobacterium extorquens).